Reading from the N-terminus, the 384-residue chain is 8-amino-7-oxononanoate synthase (384 aa).

Arg21 is a substrate binding site. 108–109 contacts pyridoxal 5'-phosphate; it reads GF. His133 lines the substrate pocket. Positions 179, 207, and 233 each coordinate pyridoxal 5'-phosphate. Lys236 is modified (N6-(pyridoxal phosphate)lysine). Substrate is bound at residue Thr352.

Belongs to the class-II pyridoxal-phosphate-dependent aminotransferase family. BioF subfamily. In terms of assembly, homodimer. Pyridoxal 5'-phosphate is required as a cofactor.

It carries out the reaction 6-carboxyhexanoyl-[ACP] + L-alanine + H(+) = (8S)-8-amino-7-oxononanoate + holo-[ACP] + CO2. It functions in the pathway cofactor biosynthesis; biotin biosynthesis. Its function is as follows. Catalyzes the decarboxylative condensation of pimeloyl-[acyl-carrier protein] and L-alanine to produce 8-amino-7-oxononanoate (AON), [acyl-carrier protein], and carbon dioxide. In Escherichia coli O9:H4 (strain HS), this protein is 8-amino-7-oxononanoate synthase.